Consider the following 672-residue polypeptide: Flap endonuclease 1 (672 aa).

Positions 1–106 (MGIKGLIGFL…QTLAKRKLLR (106 aa)) are N-domain. Asp-34 serves as a coordination point for Mg(2+). Residues Arg-47 and Arg-72 each coordinate DNA. 5 residues coordinate Mg(2+): Asp-88, Glu-160, Glu-162, Asp-181, and Asp-183. Positions 124–252 (AIRKYVGRTV…KTAYNLIKKH (129 aa)) are I-domain. A DNA-binding site is contributed by Glu-160. Gly-230 and Asp-232 together coordinate DNA. Asp-232 is a binding site for Mg(2+). The tract at residues 327–335 (TQLSLKSFF) is interaction with PCNA. The segment at 361–436 (VESAVDSTSD…DAKKRNKRVP (76 aa)) is disordered. Over residues 370 to 382 (DDGKDEVPSDDKV) the composition is skewed to basic and acidic residues.

It belongs to the XPG/RAD2 endonuclease family. FEN1 subfamily. In terms of assembly, interacts with PCNA. Three molecules of FEN1 bind to one PCNA trimer with each molecule binding to one PCNA monomer. PCNA stimulates the nuclease activity without altering cleavage specificity. The cofactor is Mg(2+). Phosphorylated. Phosphorylation upon DNA damage induces relocalization to the nuclear plasma.

It localises to the nucleus. The protein resides in the nucleolus. The protein localises to the nucleoplasm. It is found in the mitochondrion. In terms of biological role, structure-specific nuclease with 5'-flap endonuclease and 5'-3' exonuclease activities involved in DNA replication and repair. During DNA replication, cleaves the 5'-overhanging flap structure that is generated by displacement synthesis when DNA polymerase encounters the 5'-end of a downstream Okazaki fragment. It enters the flap from the 5'-end and then tracks to cleave the flap base, leaving a nick for ligation. Also involved in the long patch base excision repair (LP-BER) pathway, by cleaving within the apurinic/apyrimidinic (AP) site-terminated flap. Acts as a genome stabilization factor that prevents flaps from equilibrating into structures that lead to duplications and deletions. Also possesses 5'-3' exonuclease activity on nicked or gapped double-stranded DNA, and exhibits RNase H activity. Also involved in replication and repair of rDNA and in repairing mitochondrial DNA. This is Flap endonuclease 1 from Babesia bovis.